Here is a 98-residue protein sequence, read N- to C-terminus: Small ribosomal subunit protein uS17 (98 aa).

Belongs to the universal ribosomal protein uS17 family. In terms of assembly, part of the 30S ribosomal subunit.

One of the primary rRNA binding proteins, it binds specifically to the 5'-end of 16S ribosomal RNA. In Synechococcus sp. (strain CC9605), this protein is Small ribosomal subunit protein uS17.